The primary structure comprises 106 residues: Antitoxin MazE3 (106 aa).

As to quaternary structure, forms a complex with cognate toxin MazF3, possibly with 1:1 stoichiometry.

Functionally, antitoxin component of a type II toxin-antitoxin (TA) system. Upon expression in E.coli and M.smegmatis neutralizes the effect of cognate toxin MazF3. Overexpression of MazE3 alone decreased persister cells formation in M.smegmatis upon challenge with gentamicin or kanamycin. The polypeptide is Antitoxin MazE3 (mazE3) (Mycobacterium tuberculosis (strain ATCC 25618 / H37Rv)).